A 118-amino-acid chain; its full sequence is Large ribosomal subunit protein uL18 (118 aa).

Belongs to the universal ribosomal protein uL18 family. As to quaternary structure, part of the 50S ribosomal subunit; part of the 5S rRNA/L5/L18/L25 subcomplex. Contacts the 5S and 23S rRNAs.

Functionally, this is one of the proteins that bind and probably mediate the attachment of the 5S RNA into the large ribosomal subunit, where it forms part of the central protuberance. This Campylobacter jejuni subsp. jejuni serotype O:2 (strain ATCC 700819 / NCTC 11168) protein is Large ribosomal subunit protein uL18.